The sequence spans 183 residues: A-type ATP synthase subunit E (183 aa).

This sequence belongs to the V-ATPase E subunit family. In terms of assembly, has multiple subunits with at least A(3), B(3), C, D, E, F, H, I and proteolipid K(x).

Its subcellular location is the cell membrane. Functionally, component of the A-type ATP synthase that produces ATP from ADP in the presence of a proton gradient across the membrane. This chain is A-type ATP synthase subunit E, found in Methanosarcina barkeri (strain Fusaro / DSM 804).